The sequence spans 221 residues: GTP-binding nuclear protein Ran-2 (221 aa).

The 165-residue stretch at 10-174 (DYPSFKLVIV…LYLARKLAGD (165 aa)) folds into the Small GTPase Ran-type domain. Residue 21-28 (DGGTGKTT) participates in GTP binding. The tract at residues 40–48 (KKYEPTIGV) is switch-I. GTP is bound by residues G71, 125-128 (NKVD), and 153-155 (SAK). Residues 71 to 87 (GQEKFGGLRDGYYIHGQ) are switch-II.

This sequence belongs to the small GTPase superfamily. Ran family. As to quaternary structure, found in a nuclear export complex with RanGTP, exportin and pre-miRNA.

It is found in the nucleus. GTP-binding protein involved in nucleocytoplasmic transport. Required for the import of protein into the nucleus and also for RNA export. Involved in chromatin condensation and control of cell cycle. The sequence is that of GTP-binding nuclear protein Ran-2 (RAN2) from Oryza sativa subsp. indica (Rice).